We begin with the raw amino-acid sequence, 274 residues long: N-acetylmuramic acid 6-phosphate etherase (274 aa).

In terms of domain architecture, SIS spans I54–R217. E82 functions as the Proton donor in the catalytic mechanism. E113 is an active-site residue.

The protein belongs to the GCKR-like family. MurNAc-6-P etherase subfamily. In terms of assembly, homodimer.

It catalyses the reaction N-acetyl-D-muramate 6-phosphate + H2O = N-acetyl-D-glucosamine 6-phosphate + (R)-lactate. It participates in amino-sugar metabolism; N-acetylmuramate degradation. In terms of biological role, specifically catalyzes the cleavage of the D-lactyl ether substituent of MurNAc 6-phosphate, producing GlcNAc 6-phosphate and D-lactate. The polypeptide is N-acetylmuramic acid 6-phosphate etherase (Christiangramia forsetii (strain DSM 17595 / CGMCC 1.15422 / KT0803) (Gramella forsetii)).